The chain runs to 255 residues: MFIGIVSLFPEMFRAITDYGVTGRAVKNGLLSVQCWSPRDFTYDRHRTVDDRPYGGGPGMLMMVQPLREAIHAAKAAAGEGAKVIYLSPQGRKLDQTGVCELAANPKMILVCGRYEGVDERVIQTEIDEEWSIGDYVLSGGELPAMTLIDSVARFIPGVLGHQASAEEDSFADGLLDCPHYTRPEVLEGMEVPPVLLSGNHAEIRRWRLKQSLGRTWLRRPELLESLALTDEQAVLLAEFQREHQTKQQDYEGNV.

Residues Gly113 and 133–138 contribute to the S-adenosyl-L-methionine site; that span reads IGDYVL.

It belongs to the RNA methyltransferase TrmD family. As to quaternary structure, homodimer.

The protein resides in the cytoplasm. It carries out the reaction guanosine(37) in tRNA + S-adenosyl-L-methionine = N(1)-methylguanosine(37) in tRNA + S-adenosyl-L-homocysteine + H(+). In terms of biological role, specifically methylates guanosine-37 in various tRNAs. This chain is tRNA (guanine-N(1)-)-methyltransferase, found in Serratia proteamaculans (strain 568).